A 437-amino-acid chain; its full sequence is Xylose isomerase (437 aa).

Active-site residues include His101 and Asp104. Mg(2+) contacts are provided by Glu232, Glu268, His271, Asp296, Asp307, Asp309, and Asp339.

It belongs to the xylose isomerase family. In terms of assembly, homotetramer. It depends on Mg(2+) as a cofactor.

Its subcellular location is the cytoplasm. The enzyme catalyses alpha-D-xylose = alpha-D-xylulofuranose. This Actinobacillus succinogenes (strain ATCC 55618 / DSM 22257 / CCUG 43843 / 130Z) protein is Xylose isomerase.